Consider the following 472-residue polypeptide: Adenosylhomocysteinase (472 aa).

Substrate is bound by residues Thr-64, Asp-138, and Glu-198. Position 199 to 201 (199 to 201) interacts with NAD(+); the sequence is TTT. Residues Lys-228 and Asp-232 each coordinate substrate. NAD(+) is bound by residues Asn-233, 262 to 267, Glu-285, Asn-320, 341 to 343, and Asn-386; these read GFGDVG and IGH.

Belongs to the adenosylhomocysteinase family. It depends on NAD(+) as a cofactor.

The protein resides in the cytoplasm. It catalyses the reaction S-adenosyl-L-homocysteine + H2O = L-homocysteine + adenosine. Its pathway is amino-acid biosynthesis; L-homocysteine biosynthesis; L-homocysteine from S-adenosyl-L-homocysteine: step 1/1. Functionally, may play a key role in the regulation of the intracellular concentration of adenosylhomocysteine. The chain is Adenosylhomocysteinase from Prochlorococcus marinus (strain MIT 9312).